The following is a 221-amino-acid chain: Max dimerization protein 1 (221 aa).

Positions arginine 21–lysine 49 match the Nuclear localization signal motif. Disordered regions lie at residues glycine 29–arginine 67 and serine 178–leucine 221. Residues serine 55–leucine 107 form the bHLH domain. Residues methionine 193–leucine 221 show a composition bias toward polar residues.

In terms of assembly, heterodimer with MAX; the interaction is required for DNA-binding. DNA binding requires dimerization with another bHLH protein; does not form homodimers, and does not bind to DNA in the absence of MAX in vitro. In terms of tissue distribution, expressed primarily in cells that have undergone terminal differentiation including notochord, floor plate and cement gland.

It localises to the nucleus. In terms of biological role, component of a transcriptional repressor complex together with MAX. In complex with MAX binds to the core DNA sequence 5'-CAC[GA]TG-3'. Antagonizes MYC transcriptional activity by competing with MYC for MAX binding. Binds to the TERT promoter and represses telomerase expression, possibly by interfering with MYC binding. The protein is Max dimerization protein 1 (mxd1) of Xenopus laevis (African clawed frog).